Reading from the N-terminus, the 82-residue chain is Zinc finger CCCH domain-containing protein 13 (82 aa).

2 C3H1-type zinc fingers span residues 9-37 and 55-82; these read RPGE…HPKN and RPGQ…DHFT.

This chain is Zinc finger CCCH domain-containing protein 13, found in Arabidopsis thaliana (Mouse-ear cress).